The sequence spans 203 residues: Translation initiation factor IF-3 (203 aa).

The disordered stretch occupies residues 168-203 (QLSPKKKESATKKPATPKPATPAAVKAEKPAGDNEE). A compositionally biased stretch (basic and acidic residues) spans 193–203 (KAEKPAGDNEE).

This sequence belongs to the IF-3 family. Monomer.

The protein resides in the cytoplasm. Its function is as follows. IF-3 binds to the 30S ribosomal subunit and shifts the equilibrium between 70S ribosomes and their 50S and 30S subunits in favor of the free subunits, thus enhancing the availability of 30S subunits on which protein synthesis initiation begins. The sequence is that of Translation initiation factor IF-3 from Bacteroides fragilis (strain ATCC 25285 / DSM 2151 / CCUG 4856 / JCM 11019 / LMG 10263 / NCTC 9343 / Onslow / VPI 2553 / EN-2).